The following is a 407-amino-acid chain: Probable tRNA sulfurtransferase (407 aa).

Residues 61–165 (NEITYRLSKI…LDAIYMYEEV (105 aa)) form the THUMP domain. Residues 183–184 (ML), 208–209 (HF), arginine 265, glycine 287, and glutamine 296 contribute to the ATP site.

Belongs to the ThiI family.

Its subcellular location is the cytoplasm. It carries out the reaction [ThiI sulfur-carrier protein]-S-sulfanyl-L-cysteine + a uridine in tRNA + 2 reduced [2Fe-2S]-[ferredoxin] + ATP + H(+) = [ThiI sulfur-carrier protein]-L-cysteine + a 4-thiouridine in tRNA + 2 oxidized [2Fe-2S]-[ferredoxin] + AMP + diphosphate. It catalyses the reaction [ThiS sulfur-carrier protein]-C-terminal Gly-Gly-AMP + S-sulfanyl-L-cysteinyl-[cysteine desulfurase] + AH2 = [ThiS sulfur-carrier protein]-C-terminal-Gly-aminoethanethioate + L-cysteinyl-[cysteine desulfurase] + A + AMP + 2 H(+). The protein operates within cofactor biosynthesis; thiamine diphosphate biosynthesis. Functionally, catalyzes the ATP-dependent transfer of a sulfur to tRNA to produce 4-thiouridine in position 8 of tRNAs, which functions as a near-UV photosensor. Also catalyzes the transfer of sulfur to the sulfur carrier protein ThiS, forming ThiS-thiocarboxylate. This is a step in the synthesis of thiazole, in the thiamine biosynthesis pathway. The sulfur is donated as persulfide by IscS. The chain is Probable tRNA sulfurtransferase from Staphylococcus aureus (strain NCTC 8325 / PS 47).